The following is a 175-amino-acid chain: uncharacterized protein (175 aa).

Belongs to the asfivirus B175L family.

This is an uncharacterized protein from African swine fever virus (strain Badajoz 1971 Vero-adapted) (Ba71V).